Here is a 388-residue protein sequence, read N- to C-terminus: Succinate--CoA ligase [ADP-forming] subunit beta (388 aa).

Residues 9 to 244 (KQLFAEFGLP…PSQEDEREAH (236 aa)) form the ATP-grasp domain. Residues Lys-46, 53-55 (GRG), Glu-99, Ser-102, and Glu-107 each bind ATP. Mg(2+) is bound by residues Asn-199 and Asp-213. Substrate contacts are provided by residues Asn-264 and 321 to 323 (GIV).

Belongs to the succinate/malate CoA ligase beta subunit family. In terms of assembly, heterotetramer of two alpha and two beta subunits. The cofactor is Mg(2+).

The catalysed reaction is succinate + ATP + CoA = succinyl-CoA + ADP + phosphate. It catalyses the reaction GTP + succinate + CoA = succinyl-CoA + GDP + phosphate. Its pathway is carbohydrate metabolism; tricarboxylic acid cycle; succinate from succinyl-CoA (ligase route): step 1/1. Its function is as follows. Succinyl-CoA synthetase functions in the citric acid cycle (TCA), coupling the hydrolysis of succinyl-CoA to the synthesis of either ATP or GTP and thus represents the only step of substrate-level phosphorylation in the TCA. The beta subunit provides nucleotide specificity of the enzyme and binds the substrate succinate, while the binding sites for coenzyme A and phosphate are found in the alpha subunit. This Aliivibrio fischeri (strain ATCC 700601 / ES114) (Vibrio fischeri) protein is Succinate--CoA ligase [ADP-forming] subunit beta.